Consider the following 874-residue polypeptide: Probable inorganic carbon transporter subunit DabA (874 aa).

Positions 398, 400, 580, and 595 each coordinate Zn(2+).

It belongs to the inorganic carbon transporter (TC 9.A.2) DabA family. As to quaternary structure, forms a complex with DabB. Zn(2+) is required as a cofactor.

The protein resides in the cell membrane. Part of an energy-coupled inorganic carbon pump. In Bacillus cereus (strain Q1), this protein is Probable inorganic carbon transporter subunit DabA.